We begin with the raw amino-acid sequence, 345 residues long: NADH-ubiquinone oxidoreductase chain 2 (345 aa).

10 consecutive transmembrane segments (helical) span residues 1 to 21 (MNPI…VITM), 25 to 45 (NLML…PMLI), 56 to 76 (ATKY…AIVL), 92 to 114 (GLIL…FHFW), 149 to 171 (LNST…GGLN), 178 to 198 (IMAY…PYNP), 200 to 220 (LTLL…MALM), 241 to 261 (LTMI…TGFL), 274 to 294 (NCLI…FFYT), and 324 to 344 (LMFS…PQLI).

Belongs to the complex I subunit 2 family. As to quaternary structure, core subunit of respiratory chain NADH dehydrogenase (Complex I) which is composed of 45 different subunits. Interacts with TMEM242.

Its subcellular location is the mitochondrion inner membrane. It carries out the reaction a ubiquinone + NADH + 5 H(+)(in) = a ubiquinol + NAD(+) + 4 H(+)(out). Core subunit of the mitochondrial membrane respiratory chain NADH dehydrogenase (Complex I) which catalyzes electron transfer from NADH through the respiratory chain, using ubiquinone as an electron acceptor. Essential for the catalytic activity and assembly of complex I. The chain is NADH-ubiquinone oxidoreductase chain 2 from Mus musculus (Mouse).